A 375-amino-acid chain; its full sequence is Muconate cycloisomerase 1 (375 aa).

Residue K171 is the Proton acceptor of the active site. Residues D200, E226, and D251 each coordinate Mn(2+). The Proton donor role is filled by E329.

Belongs to the mandelate racemase/muconate lactonizing enzyme family. Homooctamer. It depends on Mn(2+) as a cofactor.

The enzyme catalyses (S)-muconolactone = cis,cis-muconate + H(+). Its pathway is aromatic compound metabolism; beta-ketoadipate pathway; 5-oxo-4,5-dihydro-2-furylacetate from catechol: step 2/3. Catalyzes a syn cycloisomerization. The chain is Muconate cycloisomerase 1 (catB) from Pseudomonas putida (Arthrobacter siderocapsulatus).